The sequence spans 377 residues: MMEFTIKRDYFITQLNDTLKAISPRTTLPILTGIKIDAKEHEVILTGSDSEISIEITIPKTVDGEDIVNISETGSVVLPGRFFVDIIKKLPGKDVKLSTNEQFQTLITSGHSEFNLSGLDPDQYPLLPQVSRDDAIQLSVKVLKNVIAQTNFAVSTSETRPVLTGVNWLIQENELICTATDSHRLAVRKLQLEDVSENKNVIIPGKALAELNKIMSDNEEDIDIFFASNQVLFKVGNVNFISRLLEGHYPDTTRLFPENYEIKLSIDNGEFYHAIDRASLLAREGGNNVIKLSTGDDVVELSSTSPEIGTVKEEVDANDVEGGSLKISFNSKYMMDALKAIDNDEVEVEFFGTMKPFILKPKGDDSVTQLILPIRTY.

Belongs to the beta sliding clamp family. Forms a ring-shaped head-to-tail homodimer around DNA which binds and tethers DNA polymerases and other proteins to the DNA. The DNA replisome complex has a single clamp-loading complex (3 tau and 1 each of delta, delta', psi and chi subunits) which binds 3 Pol III cores (1 core on the leading strand and 2 on the lagging strand) each with a beta sliding clamp dimer. Additional proteins in the replisome are other copies of gamma, psi and chi, Ssb, DNA helicase and RNA primase.

Its subcellular location is the cytoplasm. In terms of biological role, confers DNA tethering and processivity to DNA polymerases and other proteins. Acts as a clamp, forming a ring around DNA (a reaction catalyzed by the clamp-loading complex) which diffuses in an ATP-independent manner freely and bidirectionally along dsDNA. Initially characterized for its ability to contact the catalytic subunit of DNA polymerase III (Pol III), a complex, multichain enzyme responsible for most of the replicative synthesis in bacteria; Pol III exhibits 3'-5' exonuclease proofreading activity. The beta chain is required for initiation of replication as well as for processivity of DNA replication. The polypeptide is Beta sliding clamp (dnaN) (Staphylococcus aureus (strain COL)).